The primary structure comprises 736 residues: MYYKVAVSGSGKVLNVFSSEELLIGERVWLNWRNGKVKGYVLERSLSHENEATPSERDGKSFLSEGHVEIAKWVSERFFSPLGMVFDLFFPQGIDDYKEEVVVSESPFLDFDRMTLRDFLENFGEKALKEMVKKGLVRVEKNFYVKEPRPRVKKRLFLKKRISEIIREHLTVKQRMVVEYLQFNDGVPLEELLEDLEVSKSVIETLQRKNIVEIVSGDVFPKKRRILRGDFKGNISKENLFFGPTGSGKTEALFELIDVYSRKGTVLFLVPEVSVLTHTLSRLKGAFPDLKIGIYHSYLSRARKNLEWYKAASGKIDVLLGTRSAVFVPVKNLSLLIVDEEHDESFYQHTRPSYDAIVVARKISEVFDVPIILSSATPDLWTYREAKEGRIRTFNFTRRFGSLSVEVVDMRNEEKIGSFAKKTLDRIEETLEEGKRVLIYVRRKGFWGRVQCEVCGYVLKCENCDVSLVYHSDTHSLKCHQCGREYGLVESCPRCGGRLVGRTAGTERVERELKRYFPTRRIARVDREVVDNIMELESYIDKLIRGEIDILVGTRLITKSLSVPEIGLVCIMDVDSLIFNPDYSSSLRTFQLVVQALGRASRGDQGKAIIQTYNPEDTIIRKALEEDVNGFYAEELERRKALGYPPYRHLIQVAVKSKNPEVGKNSLTSLKEFLKGEEVLGPVEHWVFKLRGFYRHHLIVKTEDLERVLPKLEKALRILGIDAIVRVDPPTLEVSD.

The Helicase ATP-binding domain maps to 230–396 (DFKGNISKEN…KEGRIRTFNF (167 aa)). 243-250 (GPTGSGKT) lines the ATP pocket. The short motif at 339–342 (DEEH) is the DEAH box element. Cysteine 452, cysteine 455, cysteine 461, cysteine 464, cysteine 479, cysteine 482, cysteine 492, and cysteine 495 together coordinate Zn(2+). A Helicase C-terminal domain is found at 487 to 643 (GLVESCPRCG…EELERRKALG (157 aa)).

The protein belongs to the helicase family. PriA subfamily. Component of the replication restart primosome. Zn(2+) serves as cofactor.

It catalyses the reaction Couples ATP hydrolysis with the unwinding of duplex DNA by translocating in the 3'-5' direction.. The catalysed reaction is ATP + H2O = ADP + phosphate + H(+). Its function is as follows. Initiates the restart of stalled replication forks, which reloads the replicative helicase on sites other than the origin of replication. Recognizes and binds to abandoned replication forks and remodels them to uncover a helicase loading site. Promotes assembly of the primosome at these replication forks. In Thermotoga maritima (strain ATCC 43589 / DSM 3109 / JCM 10099 / NBRC 100826 / MSB8), this protein is Replication restart protein PriA.